The sequence spans 328 residues: Malate dehydrogenase (328 aa).

13-19 is a binding site for NAD(+); sequence GGTGQIA. 2 residues coordinate substrate: arginine 94 and arginine 100. Residues asparagine 107, glutamine 114, and 131 to 133 contribute to the NAD(+) site; that span reads VGN. The substrate site is built by asparagine 133 and arginine 164. Residue histidine 189 is the Proton acceptor of the active site.

Belongs to the LDH/MDH superfamily. MDH type 2 family.

It catalyses the reaction (S)-malate + NAD(+) = oxaloacetate + NADH + H(+). In terms of biological role, catalyzes the reversible oxidation of malate to oxaloacetate. This is Malate dehydrogenase from Chlamydia felis (strain Fe/C-56) (Chlamydophila felis).